A 161-amino-acid chain; its full sequence is Large ribosomal subunit protein uL10 (161 aa).

This sequence belongs to the universal ribosomal protein uL10 family. As to quaternary structure, part of the ribosomal stalk of the 50S ribosomal subunit. The N-terminus interacts with L11 and the large rRNA to form the base of the stalk. The C-terminus forms an elongated spine to which L12 dimers bind in a sequential fashion forming a multimeric L10(L12)X complex.

In terms of biological role, forms part of the ribosomal stalk, playing a central role in the interaction of the ribosome with GTP-bound translation factors. The sequence is that of Large ribosomal subunit protein uL10 from Malacoplasma penetrans (strain HF-2) (Mycoplasma penetrans).